Consider the following 319-residue polypeptide: MKPVFLDFEQPIAELTNKIDELRFVQDESAVDISDEIHRLQKKSNDLTKSIFSKLTPAQISQVSRHPQRPYTLDYIEALFTDFEELHGDRHFADDYAIVGGLARFNGQSVMVVGHQKGRDTKEKIRRNFGMPRPEGYRKALRLMKTAEKFGLPVMTFIDTPGAYPGIGAEERGQSEAIGKNLYELTRLRVPVLCTVIGEGGSGGALAVAVGDYVNMLQYSTYSVISPEGCASILWKTAEKAADAAQALGITADRLQKLDLVDTVIKEPLGGAHRDFGQTMKNVKAVLEKQLHEAQSIPLADLLSRRFDRIMAYGKFSEQ.

The CoA carboxyltransferase C-terminal domain occupies 39–293; that stretch reads RLQKKSNDLT…KAVLEKQLHE (255 aa).

Belongs to the AccA family. As to quaternary structure, acetyl-CoA carboxylase is a heterohexamer composed of biotin carboxyl carrier protein (AccB), biotin carboxylase (AccC) and two subunits each of ACCase subunit alpha (AccA) and ACCase subunit beta (AccD).

The protein localises to the cytoplasm. The catalysed reaction is N(6)-carboxybiotinyl-L-lysyl-[protein] + acetyl-CoA = N(6)-biotinyl-L-lysyl-[protein] + malonyl-CoA. Its pathway is lipid metabolism; malonyl-CoA biosynthesis; malonyl-CoA from acetyl-CoA: step 1/1. Component of the acetyl coenzyme A carboxylase (ACC) complex. First, biotin carboxylase catalyzes the carboxylation of biotin on its carrier protein (BCCP) and then the CO(2) group is transferred by the carboxyltransferase to acetyl-CoA to form malonyl-CoA. This chain is Acetyl-coenzyme A carboxylase carboxyl transferase subunit alpha, found in Neisseria meningitidis serogroup A / serotype 4A (strain DSM 15465 / Z2491).